The sequence spans 490 residues: Cysteine--tRNA ligase (490 aa).

Cys36 lines the Zn(2+) pocket. Positions 38 to 48 (VTVYDYSHIGH) match the 'HIGH' region motif. Residues Cys216, His241, and Glu245 each contribute to the Zn(2+) site. The 'KMSKS' region signature appears at 278–282 (KMSKS). Lys281 is a binding site for ATP.

The protein belongs to the class-I aminoacyl-tRNA synthetase family. As to quaternary structure, monomer. The cofactor is Zn(2+).

It localises to the cytoplasm. The catalysed reaction is tRNA(Cys) + L-cysteine + ATP = L-cysteinyl-tRNA(Cys) + AMP + diphosphate. This chain is Cysteine--tRNA ligase, found in Magnetococcus marinus (strain ATCC BAA-1437 / JCM 17883 / MC-1).